The chain runs to 354 residues: MELGLSLGDAVTVADGGRLELVLGLGVGVGAGVRRGEEEERGRREDVVGAGRWAAMAAASPEPSVRLSLVSSLGLHWPSETGRSEAAARGFDVNRAPSVAAGAPGMEDDEEGPGAAPALSSSPNDSGGSFPLDLSGQGLRGHAEAAAQGGGGGGGGERSSSRASDDDEGASARKKLRLSKEQSAFLEESFKEHSTLNPKQKVALAKQLNLRPRQVEVWFQNRRARTKLKQTEVDCEYLKRCCETLTEENRRLHKELAELRALKTARPFYMHLPATTLSMCPSCERVASNPATASTSAPAAATSPAAAPTAAARTAVASPEPHRPSSFAALFAAPLGFPLTAAQPRPPPPASNCL.

The segment at 98–175 is disordered; the sequence is SVAAGAPGME…DDEGASARKK (78 aa). Over residues 148-157 the composition is skewed to gly residues; it reads QGGGGGGGGE. The homeobox DNA-binding region spans 171 to 230; that stretch reads SARKKLRLSKEQSAFLEESFKEHSTLNPKQKVALAKQLNLRPRQVEVWFQNRRARTKLKQ. The interval 229–273 is leucine-zipper; it reads KQTEVDCEYLKRCCETLTEENRRLHKELAELRALKTARPFYMHLP. The disordered stretch occupies residues 294-323; that stretch reads STSAPAAATSPAAAPTAAARTAVASPEPHR.

Belongs to the HD-ZIP homeobox family. Class II subfamily. As to expression, expressed in seedlings, roots, stems, leaf sheaths and blades and panicles.

The protein localises to the nucleus. Probable transcription factor. This is Homeobox-leucine zipper protein HOX27 (HOX27) from Oryza sativa subsp. japonica (Rice).